The chain runs to 446 residues: tRNA-2-methylthio-N(6)-dimethylallyladenosine synthase (446 aa).

The region spanning 3–120 (KKIYIKTFGC…LPEMLKQRRS (118 aa)) is the MTTase N-terminal domain. [4Fe-4S] cluster is bound by residues cysteine 12, cysteine 49, cysteine 83, cysteine 157, cysteine 161, and cysteine 164. Residues 143-375 (KVEGATAFVS…QAVIDQNTRR (233 aa)) enclose the Radical SAM core domain. In terms of domain architecture, TRAM spans 378–444 (DEMVGTVQRI…AYTLRGEIIV (67 aa)).

This sequence belongs to the methylthiotransferase family. MiaB subfamily. As to quaternary structure, monomer. It depends on [4Fe-4S] cluster as a cofactor.

Its subcellular location is the cytoplasm. It catalyses the reaction N(6)-dimethylallyladenosine(37) in tRNA + (sulfur carrier)-SH + AH2 + 2 S-adenosyl-L-methionine = 2-methylsulfanyl-N(6)-dimethylallyladenosine(37) in tRNA + (sulfur carrier)-H + 5'-deoxyadenosine + L-methionine + A + S-adenosyl-L-homocysteine + 2 H(+). In terms of biological role, catalyzes the methylthiolation of N6-(dimethylallyl)adenosine (i(6)A), leading to the formation of 2-methylthio-N6-(dimethylallyl)adenosine (ms(2)i(6)A) at position 37 in tRNAs that read codons beginning with uridine. The protein is tRNA-2-methylthio-N(6)-dimethylallyladenosine synthase of Janthinobacterium sp. (strain Marseille) (Minibacterium massiliensis).